A 267-amino-acid chain; its full sequence is Putative hydro-lyase Arth_3576 (267 aa).

The protein belongs to the D-glutamate cyclase family.

This Arthrobacter sp. (strain FB24) protein is Putative hydro-lyase Arth_3576.